The chain runs to 614 residues: V-type proton ATPase catalytic subunit A (614 aa).

Residue 247–254 participates in ATP binding; that stretch reads GAFGCGKT.

Belongs to the ATPase alpha/beta chains family. As to quaternary structure, V-ATPase is a heteromultimeric enzyme made up of two complexes: the ATP-hydrolytic V1 complex and the proton translocation V0 complex. The V1 complex consists of three catalytic AB heterodimers that form a heterohexamer, three peripheral stalks each consisting of EG heterodimers, one central rotor including subunits D and F, and the regulatory subunits C and H. The proton translocation complex V0 consists of the proton transport subunit a, a ring of proteolipid subunits c9c'', rotary subunit d, subunits e and f, and the accessory subunits VhaAC45 and ATP6AP2.

The enzyme catalyses ATP + H2O + 4 H(+)(in) = ADP + phosphate + 5 H(+)(out). ATP hydrolysis occurs at the interface between the nucleotide-binding domains of subunits A and B. ATP hydrolysis triggers a conformational change in the subunits D and F, which induces a shift of subunit d. The c-ring is subsequently rotated and results in a continuous proton translocation across the membrane. Catalytic subunit of the V1 complex of vacuolar(H+)-ATPase (V-ATPase), a multisubunit enzyme composed of a peripheral complex (V1) that hydrolyzes ATP and a membrane integral complex (V0) that translocates protons. V-ATPase is responsible for acidifying and maintaining the pH of intracellular compartments and in some cell types, is targeted to the plasma membrane, where it is responsible for acidifying the extracellular environment. In Aedes aegypti (Yellowfever mosquito), this protein is V-type proton ATPase catalytic subunit A (VhaA).